The chain runs to 1016 residues: MVLPTCPMAEFALPRHSAVMERLRRRIELCRRHHSTCEARYEAVSPERLELERQHTFALHQRCIQAKAKRAGKHRQPPAATAPAPAAPAPRLDAADGPEHGRPATHLHDTVKRNLDSATSPQNGDQQNGYGDLFPGHKKTRREAPLGVAISSNGLPPASPLGQSDKPSGADALQSSGKHSLGLDSLNKKRLADSSLHLNGGSNPSESFPLSLNKELKQEPVEDLPCMITGTVGSISQSNLMPDLNLNEQEWKELIEELNRSVPDEDMKDLFNEDFEEKKDPESSGSATQTPLAQDINIKTEFSPAAFEQEQLGSPQVRAGSAGQTFLGPSSAPVSTDSPSLGGSQTLFHTSGQPRADNPSPNLMPASAQAQNAQRALAGVVLPSQGPGGASELSSAHQLQQIAAKQKREQMLQNPQQATPAPAPGQMSTWQQTGPSHSSLDVPYPMEKPASPSSYKQDFTNSKLLMMPSVNKSSPRPGGPYLQPSHVNLLSHQPPSNLNQNSANNQGSVLDYGNTKPLSHYKADCGQGSPGSGQSKPALMAYLPQQLSHISHEQNSLFLMKPKPGNMPFRSLVPPGQEQNPSSVPVQAQATSVGTQPPAVSVASSHNSSPYLSSQQQAAVMKQHQLLLDQQKQREQQQKHLQQQQFLQRQQHLLAEQEKQQFQRHLTRPPPQYQDPTQGSFPQQVGQFTGSSAAVPGMNTLGPSNSSCPRVFPQAGNLMPMGPGHASVSSLPTNSGQQDRGVAQFPGSQNMPQSSLYGMASGITQIVAQPPPQATNGHAHIPRQTNVGQNTSVSAAYGQNSLGSSGLSQQHNKGTLNPGLTKPPVPRVSPAMGGQNSSWQHQGMPNLSGQTPGNSNVSPFTAASSFHMQQQAHLKMSSPQFSQAVPNRPMAPMSSAAAVGSLLPPVSAQQRTSAPAPAPPPTAPQQGLPGLSPAGPELGAFSQSPASQMGGRAGLHCTQAYPVRTAGQELPFAYSGQPGGSGLSSVAGHTDLIDSLLKNRTSEEWMSDLDDLLGSQ.

Positions 1-123 (MVLPTCPMAE…NLDSATSPQN (123 aa)) are required for interaction with NOTCH proteins. Ser45 is modified (phosphoserine). 5 disordered regions span residues 65–184 (QAKA…LGLD), 263–487 (PDED…PSHV), 561–617 (KPKP…SQQQ), 658–681 (EKQQ…QGSF), and 796–953 (AYGQ…GGRA). Over residues 67 to 76 (KAKRAGKHRQ) the composition is skewed to basic residues. Positions 93-115 (DAADGPEHGRPATHLHDTVKRNL) are enriched in basic and acidic residues. A compositionally biased stretch (polar residues) spans 116-129 (DSATSPQNGDQQNG). Phosphoserine is present on Ser120. A compositionally biased stretch (basic and acidic residues) spans 263–282 (PDEDMKDLFNEDFEEKKDPE). The span at 283 to 292 (SSGSATQTPL) shows a compositional bias: polar residues. Ser303 and Ser314 each carry phosphoserine. Polar residues predominate over residues 322 to 353 (AGQTFLGPSSAPVSTDSPSLGGSQTLFHTSGQ). Residue Ser360 is modified to Phosphoserine. The span at 392 to 403 (ELSSAHQLQQIA) shows a compositional bias: polar residues. A compositionally biased stretch (low complexity) spans 413–426 (QNPQQATPAPAPGQ). Polar residues-rich tracts occupy residues 427–439 (MSTW…SHSS), 451–463 (SPSS…TNSK), 577–595 (QEQN…SVGT), and 602–617 (VASS…SQQQ). Residues 801-810 (SLGSSGLSQQ) show a composition bias toward low complexity. Lys822 is subject to N6-acetyllysine. Over residues 834–885 (GQNSSWQHQGMPNLSGQTPGNSNVSPFTAASSFHMQQQAHLKMSSPQFSQAV) the composition is skewed to polar residues. Residue Ser1015 is modified to Phosphoserine.

The protein belongs to the mastermind family. Interacts (via N-terminus) with NOTCH1, NOTCH2, NOTCH3 and NOTCH4 (via ankyrin repeat region). Interacts (via N-terminus) with p53 (via DNA-binding region). Forms a DNA-binding complex with Notch proteins and RBPSUH/RBP-J kappa/CBF1. Also binds CREBBP/CBP and CDK8. Forms a complex with PRAG1, NOTCH1 and MAML1, in a MAML1-dependent manner. As to expression, widely expressed with highest levels in heart, pancreas, peripheral blood leukocytes and spleen.

The protein resides in the nucleus speckle. In terms of biological role, acts as a transcriptional coactivator for NOTCH proteins. Has been shown to amplify NOTCH-induced transcription of HES1. Enhances phosphorylation and proteolytic turnover of the NOTCH intracellular domain in the nucleus through interaction with CDK8. Binds to CREBBP/CBP which promotes nucleosome acetylation at NOTCH enhancers and activates transcription. Induces phosphorylation and localization of CREBBP to nuclear foci. Plays a role in hematopoietic development by regulating NOTCH-mediated lymphoid cell fate decisions. This chain is Mastermind-like protein 1, found in Homo sapiens (Human).